Here is a 483-residue protein sequence, read N- to C-terminus: Phosphoglucosamine mutase (483 aa).

Serine 131 functions as the Phosphoserine intermediate in the catalytic mechanism. Residues serine 131, aspartate 272, aspartate 274, and aspartate 276 each coordinate Mg(2+). Serine 131 carries the post-translational modification Phosphoserine.

It belongs to the phosphohexose mutase family. It depends on Mg(2+) as a cofactor. Post-translationally, activated by phosphorylation.

It catalyses the reaction alpha-D-glucosamine 1-phosphate = D-glucosamine 6-phosphate. In terms of biological role, catalyzes the conversion of glucosamine-6-phosphate to glucosamine-1-phosphate. This chain is Phosphoglucosamine mutase, found in Magnetococcus marinus (strain ATCC BAA-1437 / JCM 17883 / MC-1).